A 428-amino-acid polypeptide reads, in one-letter code: Glutamate-1-semialdehyde 2,1-aminomutase (428 aa).

The residue at position 265 (Lys-265) is an N6-(pyridoxal phosphate)lysine.

The protein belongs to the class-III pyridoxal-phosphate-dependent aminotransferase family. HemL subfamily. Homodimer. It depends on pyridoxal 5'-phosphate as a cofactor.

Its subcellular location is the cytoplasm. The enzyme catalyses (S)-4-amino-5-oxopentanoate = 5-aminolevulinate. Its pathway is porphyrin-containing compound metabolism; protoporphyrin-IX biosynthesis; 5-aminolevulinate from L-glutamyl-tRNA(Glu): step 2/2. This chain is Glutamate-1-semialdehyde 2,1-aminomutase, found in Aeromonas hydrophila subsp. hydrophila (strain ATCC 7966 / DSM 30187 / BCRC 13018 / CCUG 14551 / JCM 1027 / KCTC 2358 / NCIMB 9240 / NCTC 8049).